Consider the following 57-residue polypeptide: MFTVFLLVVLATTVVSFPSDRESDGANDEARTDEPEEHGPDRNGCCRNPACESHRCG.

The first 16 residues, 1–16 (MFTVFLLVVLATTVVS), serve as a signal peptide directing secretion. A propeptide spanning residues 17–42 (FPSDRESDGANDEARTDEPEEHGPDR) is cleaved from the precursor. A disordered region spans residues 17 to 46 (FPSDRESDGANDEARTDEPEEHGPDRNGCC). Positions 19–41 (SDRESDGANDEARTDEPEEHGPD) are enriched in basic and acidic residues. Disulfide bonds link cysteine 45-cysteine 51 and cysteine 46-cysteine 56. Cysteine 56 bears the Cysteine amide mark.

It belongs to the conotoxin A superfamily. In terms of tissue distribution, expressed by the venom duct.

It localises to the secreted. Functionally, alpha-conotoxins act on postsynaptic membranes, they bind to the nicotinic acetylcholine receptors (nAChR) and thus inhibit them. The protein is Alpha-conotoxin-like Sm1.2 of Conus stercusmuscarum (Fly-specked cone).